Consider the following 153-residue polypeptide: Small ribosomal subunit protein bS6 (153 aa).

Positions 94 to 153 are disordered; the sequence is EAHEEGPSAMMQKRDRDDRPRRDGDRPDRGPREDRGPRPPREGGFGDREDRPRRPREDRA.

Belongs to the bacterial ribosomal protein bS6 family.

Its function is as follows. Binds together with bS18 to 16S ribosomal RNA. This chain is Small ribosomal subunit protein bS6, found in Agrobacterium fabrum (strain C58 / ATCC 33970) (Agrobacterium tumefaciens (strain C58)).